We begin with the raw amino-acid sequence, 258 residues long: GCN5-related N-acetyltransferase 2, chloroplastic (258 aa).

Residues 1–58 (MLLIPISSSSSSSISPPPNSYPSNHHSLFFSNLTFPIQHGSRKLKTLRLRANFWESIR) constitute a chloroplast transit peptide. Residues 107-194 (IIFSSGGEID…DHAFNATIWD (88 aa)) are interaction with begomoviruses NSP protein. Residues 107–258 (IIFSSGGEID…GIKGMFWYPK (152 aa)) enclose the N-acetyltransferase domain. Acetyl-CoA contacts are provided by residues 195–197 (VLV), 203–208 (GQGLGK), 231–233 (DSQ), and Y238. Y238 functions as the Proton donor in the catalytic mechanism.

This sequence belongs to the acetyltransferase family. GNAT subfamily. As to quaternary structure, oligomer. Interacts with begomoviruses NSP but not with CP. This interaction may allow NSP to recruit NSI monomers to acetylate viral genome-bound CP and thus regulate nuclear export of viral genome by NSP. S-sulfhydrated and activated by hydrogen sulfide H(2)S to promote melatonin accumulation and subsequent melatonin-dependent stomotal closure to combat osmotic stress. In terms of processing, autoacetylated. Highly expressed in cauline leaves and seeds, at lower levels in stems, siliques, inflorescences and rosettes leaves and at very low levels in roots. Expressed in the xylem parenchyma and phloem of the leaves and root, and in guard cells of young leaves.

Its subcellular location is the plastid. It localises to the chloroplast. The enzyme catalyses 5-methoxytryptamine + acetyl-CoA = melatonin + CoA + H(+). It carries out the reaction L-lysyl-[histone] + acetyl-CoA = N(6)-acetyl-L-lysyl-[histone] + CoA + H(+). It catalyses the reaction L-lysyl-[protein] + acetyl-CoA = N(6)-acetyl-L-lysyl-[protein] + CoA + H(+). The catalysed reaction is serotonin + acetyl-CoA = N-acetylserotonin + CoA + H(+). The enzyme catalyses N-terminal L-alanyl-[protein] + acetyl-CoA = N-terminal N(alpha)-acetyl-L-alanyl-[protein] + CoA + H(+). It carries out the reaction N-terminal L-seryl-[protein] + acetyl-CoA = N-terminal N(alpha)-acetyl-L-seryl-[protein] + CoA + H(+). It catalyses the reaction N-terminal L-valyl-[protein] + acetyl-CoA = N-terminal N(alpha)-acetyl-L-valyl-[protein] + CoA + H(+). The catalysed reaction is N-terminal glycyl-[protein] + acetyl-CoA = N-terminal N(alpha)-acetylglycyl-[protein] + CoA + H(+). The enzyme catalyses an N-terminal L-alpha-aminoacyl-[protein] + acetyl-CoA = N-terminal N(alpha)-acetyl-L-alpha-aminoacyl-[protein] + CoA + H(+). It carries out the reaction N-terminal L-threonyl-[protein] + acetyl-CoA = N-terminal N(alpha)-acetyl-L-threonyl-[protein] + CoA + H(+). It catalyses the reaction N-terminal L-methionyl-[protein] + acetyl-CoA = N-terminal N(alpha)-acetyl-L-methionyl-[protein] + CoA + H(+). The catalysed reaction is N-terminal L-leucyl-[protein] + acetyl-CoA = N-terminal N(alpha)-acetyl-L-leucyl-[protein] + CoA + H(+). Inhibited by the viral nuclear shuttle protein (NSP) that binds to the region required for oligomerization. Its function is as follows. Protein acetyltransferase with dual specificity triggering both N-alpha-acetylation (NTA), with a preference for alanine, serine, threonine, methionine and to a lower extent valine as substrates (can also use glycine and leucine), and epsilon-lysine acetylation (KA) of several plastid proteins. Triggers lysine acetylation in KEA1 and KEA2. Acetylates in vitro histones H2A and H3. Does not act as a transcriptional activator but required for the dynamic reorganization of thylakoid protein complexes and grana during photosynthetic state transitions. Involved in melatonin biosynthesis by catalyzing the formation of N-acetylserotonin (NAS) from serotonin and of melatonin (N-acetyl-5-methoxytryptamine) from 5-methoxytryptamine (5-MT). By triggering melatonin biosynthesis, contributes to the chloroplast protein quality control (CPQC), which plays a pivotal role in starch synthesis, and confers melatonin-associated tolerance to high light (HL) stress. Prevents the accumulation of oil and anthocyanin content in mature seeds and avoids seed germination in a melatonin-dependent manner, but promotes mucilage production in the seed coat. Contributes to melatonin-mediated anthocyanin production in cold-exposed seedlings. Implicated in melatonin-monitored circadian dynamics of stomatal aperture to minimize night water loss and promote drought tolerance, partly by triggering hydrogen sulfide H(2)S-dependent stomotal closure in response to osmotic stress. (Microbial infection) Required for begomovirus infection and systemic spread. In case of begomoviruses infection, acetylates the capsid protein (CP), but not the nuclear shuttle protein (NSP). Stimulates melatonin-triggered defense responses to the necrotrophic Botrytis cinerea. This is GCN5-related N-acetyltransferase 2, chloroplastic from Arabidopsis thaliana (Mouse-ear cress).